Here is an 800-residue protein sequence, read N- to C-terminus: DNA topoisomerase 4 subunit A (800 aa).

The 465-residue stretch at 31–495 (LPDVRDGLKP…EIEEIKIDKE (465 aa)) folds into the Topo IIA-type catalytic domain. The active-site O-(5'-phospho-DNA)-tyrosine intermediate is the Y119.

The protein belongs to the type II topoisomerase GyrA/ParC subunit family. ParC type 2 subfamily. As to quaternary structure, heterotetramer composed of ParC and ParE.

It is found in the cell membrane. It carries out the reaction ATP-dependent breakage, passage and rejoining of double-stranded DNA.. Functionally, topoisomerase IV is essential for chromosome segregation. It relaxes supercoiled DNA. Performs the decatenation events required during the replication of a circular DNA molecule. This chain is DNA topoisomerase 4 subunit A, found in Staphylococcus aureus (strain MSSA476).